A 25-amino-acid chain; its full sequence is Snaclec bothroalternin subunit alpha/beta (25 aa).

In terms of domain architecture, C-type lectin spans 1-25; that stretch reads DCPSDWSNHEGHCYRVFNEWMNWAD. Cysteine 2 and cysteine 13 are disulfide-bonded.

It belongs to the snaclec family. As to quaternary structure, heterodimer of subunits alpha and beta; disulfide-linked. Expressed by the venom gland.

The protein localises to the secreted. Its function is as follows. Thrombin (F2) inhibitor that inhibits aggregation of rabbit platelets induced by alpha-thrombin. The protein is Snaclec bothroalternin subunit alpha/beta of Bothrops alternatus (Urutu).